The following is a 702-amino-acid chain: Rho GTPase-activating protein 22 (702 aa).

The PH domain maps to 43-151 (PVLKAGWLRK…WVQAIRRVIW (109 aa)). The Rho-GAP domain maps to 161–355 (QRLEDTVHHE…VLIRKHGQLF (195 aa)). 4 disordered regions span residues 360–433 (LEEP…HTLP), 438–457 (SFRQQGSRSESPKGVNSSLE), 480–511 (RASSGDRLKDTGSAQRLSTYDNVPPSSQFSST), and 555–596 (PSPL…TQAH). 2 positions are modified to phosphoserine: serine 365 and serine 397. Composition is skewed to polar residues over residues 407-421 (SRTSPPRLGSQTGPA), 438-456 (SFRQQGSRSESPKGVNSSL), 491-504 (GSAQRLSTYDNVPP), and 581-594 (SGSSEPNDPGSPTQ). Residues 594–691 (QAHVRRCRAL…EEFFSTLGSL (98 aa)) are a coiled coil.

In terms of assembly, interacts with VEZF1. Predominantly present in endothelial cells (at protein level).

Its subcellular location is the cytoplasm. It localises to the nucleus. Functionally, rho GTPase-activating protein involved in the signal transduction pathway that regulates endothelial cell capillary tube formation during angiogenesis. Acts as a GTPase activator for the RAC1 by converting it to an inactive GDP-bound state. Inhibits RAC1-dependent lamellipodia formation. May also play a role in transcription regulation via its interaction with VEZF1, by regulating activity of the endothelin-1 (EDN1) promoter. This is Rho GTPase-activating protein 22 (Arhgap22) from Mus musculus (Mouse).